The sequence spans 325 residues: Large ribosomal subunit protein uL4m (325 aa).

The tract at residues 113–158 is disordered; sequence ASTKTRYEVHGSHKKMSPQKGTGNARRGTRQSPLMKGGGKTFGPKP.

This sequence belongs to the universal ribosomal protein uL4 family. In terms of assembly, component of the mitochondrial large ribosomal subunit (mt-LSU). Mature N.crassa 74S mitochondrial ribosomes consist of a small (37S) and a large (54S) subunit. The 37S small subunit contains a 16S ribosomal RNA (16S mt-rRNA) and 32 different proteins. The 54S large subunit contains a 23S rRNA (23S mt-rRNA) and 42 different proteins.

The protein resides in the mitochondrion. In terms of biological role, component of the mitochondrial ribosome (mitoribosome), a dedicated translation machinery responsible for the synthesis of mitochondrial genome-encoded proteins, including at least some of the essential transmembrane subunits of the mitochondrial respiratory chain. The mitoribosomes are attached to the mitochondrial inner membrane and translation products are cotranslationally integrated into the membrane. The protein is Large ribosomal subunit protein uL4m (yml6) of Neurospora crassa (strain ATCC 24698 / 74-OR23-1A / CBS 708.71 / DSM 1257 / FGSC 987).